Consider the following 203-residue polypeptide: Arcadin-2 (203 aa).

Interacts with crenactin.

The protein localises to the cytoplasm. It is found in the cytoskeleton. Its function is as follows. Part of an actin-like archaeal cytoskeleton. Prevents polymerization of crenactin filaments by binding its C-terminus into crenactin's hydrophobic groove. May act by competing with the D-loop of the following crenactin subunit for the hydrophobic groove. This Pyrobaculum calidifontis (strain DSM 21063 / JCM 11548 / VA1) protein is Arcadin-2.